Here is a 445-residue protein sequence, read N- to C-terminus: Ribosome biogenesis protein YTM1 (445 aa).

The tract at residues 8–89 is ubiquitin-like (UBL) domain; it reads VKVKFFTREQ…EAVLNVEYTR (82 aa). The segment at 99–445 is sufficient for interaction with ERB1 and association with 66S pre-ribosomes; the sequence is SFSNEDWVSA…FNKGDNIFKN (347 aa). 7 WD repeats span residues 101 to 138, 140 to 178, 195 to 232, 270 to 310, 312 to 351, 358 to 398, and 409 to 445; these read SNEDWVSALDVGAERIVSGSYDGVVRTWNLSGKIEKQY, GHTGAVRAVKFISSTRLVSGGNDRTLRLWKTKNDDVKHV, GHQAPVVSVDVQGDRILSASYDNSIGFWSTNHKDMTAV, SHKA…CVDT, STSYSLLSMVELPKLRLLACGSSARHITLHDPRADSSAKI, GHKN…SIYT, and GINDKVFAVKWAKGVGIISGGQDKKIQFNKGDNIFKN.

This sequence belongs to the WD repeat WDR12/YTM1 family. Component of the NOP7 complex, composed of ERB1, NOP7 and YTM1. The complex is held together by ERB1, which interacts with NOP7 via its N-terminal domain and with YTM1 via a high-affinity interaction between the seven-bladed beta-propeller domains of the 2 proteins. The NOP7 complex associates with the 66S pre-ribosome. Interacts (via UBL domain) with MDN1 (via VWFA/MIDAS domain).

The protein resides in the nucleus. It localises to the nucleolus. It is found in the nucleoplasm. Its function is as follows. Component of the NOP7 complex, which is required for maturation of the 25S and 5.8S ribosomal RNAs and formation of the 60S ribosome. The protein is Ribosome biogenesis protein YTM1 of Eremothecium gossypii (strain ATCC 10895 / CBS 109.51 / FGSC 9923 / NRRL Y-1056) (Yeast).